A 200-amino-acid chain; its full sequence is Holliday junction branch migration complex subunit RuvA (200 aa).

The tract at residues 1-64 is domain I; sequence MFAYFKGSLV…EDALQLYGFF (64 aa). Residues 65-143 form a domain II region; sequence KEEERQLFRL…KLPLVTPAAG (79 aa). A flexible linker region spans residues 143-147; that stretch reads GKAAM. The segment at 148–200 is domain III; the sequence is PSHHVKDDAVHALVTLGFSRLLAQKAVSALLEEKPEQSVEEVIKYALATIHNS.

Belongs to the RuvA family. In terms of assembly, homotetramer. Forms an RuvA(8)-RuvB(12)-Holliday junction (HJ) complex. HJ DNA is sandwiched between 2 RuvA tetramers; dsDNA enters through RuvA and exits via RuvB. An RuvB hexamer assembles on each DNA strand where it exits the tetramer. Each RuvB hexamer is contacted by two RuvA subunits (via domain III) on 2 adjacent RuvB subunits; this complex drives branch migration. In the full resolvosome a probable DNA-RuvA(4)-RuvB(12)-RuvC(2) complex forms which resolves the HJ.

Its subcellular location is the cytoplasm. Its function is as follows. The RuvA-RuvB-RuvC complex processes Holliday junction (HJ) DNA during genetic recombination and DNA repair, while the RuvA-RuvB complex plays an important role in the rescue of blocked DNA replication forks via replication fork reversal (RFR). RuvA specifically binds to HJ cruciform DNA, conferring on it an open structure. The RuvB hexamer acts as an ATP-dependent pump, pulling dsDNA into and through the RuvAB complex. HJ branch migration allows RuvC to scan DNA until it finds its consensus sequence, where it cleaves and resolves the cruciform DNA. In Chlorobium phaeobacteroides (strain DSM 266 / SMG 266 / 2430), this protein is Holliday junction branch migration complex subunit RuvA.